The following is a 409-amino-acid chain: Probable beta-1,3-galactosyltransferase 3 (409 aa).

A helical; Signal-anchor for type II membrane protein transmembrane segment spans residues 20–42 (WTFLLCFGSFCFGILFTDRMWII).

Belongs to the glycosyltransferase 31 family. Requires Mn(2+) as cofactor.

The protein localises to the golgi apparatus membrane. Its pathway is protein modification; protein glycosylation. Beta-1,3-galactosyltransferase that transfers galactose from UDP-galactose to substrates with a terminal glycosyl residue. In Arabidopsis thaliana (Mouse-ear cress), this protein is Probable beta-1,3-galactosyltransferase 3 (B3GALT3).